The chain runs to 208 residues: Nitrate/nitrite response regulator protein homolog (208 aa).

In terms of domain architecture, Response regulatory spans 6 to 122; that stretch reads KVLLIDDHPL…TLLEQIKRIA (117 aa). Position 57 is a 4-aspartylphosphate (D57). The HTH luxR-type domain occupies 142 to 207; the sequence is EDNPLDSLTD…AATVLFFEQN (66 aa). The H-T-H motif DNA-binding region spans 166–185; sequence NKQIAAQLFISEETVKVHIR.

Its function is as follows. Could activate the expression of a formate dehydrogenase operon and could repress the transcription of the fumarate reductase (frdABCD) operon. The chain is Nitrate/nitrite response regulator protein homolog (narP) from Haemophilus influenzae (strain ATCC 51907 / DSM 11121 / KW20 / Rd).